The following is a 51-amino-acid chain: Insulin (51 aa).

3 disulfides stabilise this stretch: C7-C37, C19-C50, and C36-C41.

The protein belongs to the insulin family. As to quaternary structure, heterodimer of a B chain and an A chain linked by two disulfide bonds.

It is found in the secreted. Insulin decreases blood glucose concentration. It increases cell permeability to monosaccharides, amino acids and fatty acids. It accelerates glycolysis, the pentose phosphate cycle, and glycogen synthesis in liver. In Alligator mississippiensis (American alligator), this protein is Insulin (INS).